The sequence spans 430 residues: Histidine--tRNA ligase (430 aa).

The protein belongs to the class-II aminoacyl-tRNA synthetase family. In terms of assembly, homodimer.

It localises to the cytoplasm. The catalysed reaction is tRNA(His) + L-histidine + ATP = L-histidyl-tRNA(His) + AMP + diphosphate + H(+). This chain is Histidine--tRNA ligase, found in Lactococcus lactis subsp. cremoris (strain SK11).